The sequence spans 276 residues: Diaminopimelate epimerase (276 aa).

Substrate-binding residues include N13, Q46, and N66. C75 functions as the Proton donor in the catalytic mechanism. Residues 76–77, N159, N192, and 210–211 each bind substrate; these read GN and ER. The active-site Proton acceptor is C219. Position 220 to 221 (220 to 221) interacts with substrate; that stretch reads GT.

It belongs to the diaminopimelate epimerase family. In terms of assembly, homodimer.

It localises to the cytoplasm. The enzyme catalyses (2S,6S)-2,6-diaminopimelate = meso-2,6-diaminopimelate. The protein operates within amino-acid biosynthesis; L-lysine biosynthesis via DAP pathway; DL-2,6-diaminopimelate from LL-2,6-diaminopimelate: step 1/1. In terms of biological role, catalyzes the stereoinversion of LL-2,6-diaminopimelate (L,L-DAP) to meso-diaminopimelate (meso-DAP), a precursor of L-lysine and an essential component of the bacterial peptidoglycan. The protein is Diaminopimelate epimerase of Pseudomonas fluorescens.